Consider the following 80-residue polypeptide: Transcription elongation factor 1 homolog (80 aa).

Residues C25, C28, C49, and C52 each contribute to the Zn(2+) site.

It belongs to the ELOF1 family.

It is found in the nucleus. In terms of biological role, transcription elongation factor implicated in the maintenance of proper chromatin structure in actively transcribed regions. The sequence is that of Transcription elongation factor 1 homolog from Encephalitozoon cuniculi (strain GB-M1) (Microsporidian parasite).